The chain runs to 269 residues: Shikimate dehydrogenase (NADP(+)) (269 aa).

Residues Ser-17–Ser-19 and Thr-64 each bind shikimate. Lys-68 serves as the catalytic Proton acceptor. An NADP(+)-binding site is contributed by Glu-80. Positions 89 and 105 each coordinate shikimate. NADP(+) contacts are provided by residues Gly-130–Ala-134, Asn-154–Lys-159, and Met-213. Residue Tyr-215 participates in shikimate binding. Residue Gly-237 coordinates NADP(+).

This sequence belongs to the shikimate dehydrogenase family. In terms of assembly, homodimer.

The enzyme catalyses shikimate + NADP(+) = 3-dehydroshikimate + NADPH + H(+). It functions in the pathway metabolic intermediate biosynthesis; chorismate biosynthesis; chorismate from D-erythrose 4-phosphate and phosphoenolpyruvate: step 4/7. In terms of biological role, involved in the biosynthesis of the chorismate, which leads to the biosynthesis of aromatic amino acids. Catalyzes the reversible NADPH linked reduction of 3-dehydroshikimate (DHSA) to yield shikimate (SA). This Neisseria pharyngis protein is Shikimate dehydrogenase (NADP(+)).